Reading from the N-terminus, the 319-residue chain is Probable cystathionine gamma-synthase (319 aa).

Lys-197 carries the post-translational modification N6-(pyridoxal phosphate)lysine.

Belongs to the trans-sulfuration enzymes family. Homotetramer. It depends on pyridoxal 5'-phosphate as a cofactor.

It localises to the cytoplasm. It catalyses the reaction O-succinyl-L-homoserine + L-cysteine = L,L-cystathionine + succinate + H(+). In terms of biological role, catalyzes the formation of L-cystathionine from O-succinyl-L-homoserine (OSHS) and L-cysteine, via a gamma-replacement reaction. In the absence of thiol, catalyzes gamma-elimination to form 2-oxobutanoate, succinate and ammonia. This Herpetosiphon aurantiacus (Herpetosiphon giganteus) protein is Probable cystathionine gamma-synthase (metB).